Consider the following 317-residue polypeptide: Acetyl-coenzyme A carboxylase carboxyl transferase subunit beta (317 aa).

The tract at residues M1–A28 is disordered. One can recognise a CoA carboxyltransferase N-terminal domain in the interval P55–Q317. Zn(2+) is bound by residues C59, C62, C78, and C81. Residues C59–C81 form a C4-type zinc finger.

It belongs to the AccD/PCCB family. In terms of assembly, acetyl-CoA carboxylase is a heterohexamer composed of biotin carboxyl carrier protein (AccB), biotin carboxylase (AccC) and two subunits each of ACCase subunit alpha (AccA) and ACCase subunit beta (AccD). It depends on Zn(2+) as a cofactor.

The protein localises to the cytoplasm. It carries out the reaction N(6)-carboxybiotinyl-L-lysyl-[protein] + acetyl-CoA = N(6)-biotinyl-L-lysyl-[protein] + malonyl-CoA. It functions in the pathway lipid metabolism; malonyl-CoA biosynthesis; malonyl-CoA from acetyl-CoA: step 1/1. Component of the acetyl coenzyme A carboxylase (ACC) complex. Biotin carboxylase (BC) catalyzes the carboxylation of biotin on its carrier protein (BCCP) and then the CO(2) group is transferred by the transcarboxylase to acetyl-CoA to form malonyl-CoA. This Psychrobacter arcticus (strain DSM 17307 / VKM B-2377 / 273-4) protein is Acetyl-coenzyme A carboxylase carboxyl transferase subunit beta.